The chain runs to 121 residues: Large ribosomal subunit protein bL12 (121 aa).

The protein belongs to the bacterial ribosomal protein bL12 family. In terms of assembly, homodimer. Part of the ribosomal stalk of the 50S ribosomal subunit. Forms a multimeric L10(L12)X complex, where L10 forms an elongated spine to which 2 to 4 L12 dimers bind in a sequential fashion. Binds GTP-bound translation factors.

Forms part of the ribosomal stalk which helps the ribosome interact with GTP-bound translation factors. Is thus essential for accurate translation. This Leuconostoc citreum (strain KM20) protein is Large ribosomal subunit protein bL12.